Consider the following 265-residue polypeptide: 5'-nucleotidase SurE (265 aa).

Residues aspartate 8, aspartate 9, serine 40, and asparagine 98 each coordinate a divalent metal cation.

Belongs to the SurE nucleotidase family. It depends on a divalent metal cation as a cofactor.

It is found in the cytoplasm. The catalysed reaction is a ribonucleoside 5'-phosphate + H2O = a ribonucleoside + phosphate. Nucleotidase that shows phosphatase activity on nucleoside 5'-monophosphates. The protein is 5'-nucleotidase SurE of Trichormus variabilis (strain ATCC 29413 / PCC 7937) (Anabaena variabilis).